Here is a 125-residue protein sequence, read N- to C-terminus: Small ribosomal subunit protein uS12 (125 aa).

The segment at 1–28 (MPTISQLIGSERKRLTRKTKSPALKSCP) is disordered. Aspartate 89 bears the 3-methylthioaspartic acid mark. The segment at 104-125 (TAGVKDRRQSRSKYGAKAPKND) is disordered.

Belongs to the universal ribosomal protein uS12 family. In terms of assembly, part of the 30S ribosomal subunit. Contacts proteins S8 and S17. May interact with IF1 in the 30S initiation complex.

With S4 and S5 plays an important role in translational accuracy. In terms of biological role, interacts with and stabilizes bases of the 16S rRNA that are involved in tRNA selection in the A site and with the mRNA backbone. Located at the interface of the 30S and 50S subunits, it traverses the body of the 30S subunit contacting proteins on the other side and probably holding the rRNA structure together. The combined cluster of proteins S8, S12 and S17 appears to hold together the shoulder and platform of the 30S subunit. The polypeptide is Small ribosomal subunit protein uS12 (Prochlorococcus marinus subsp. pastoris (strain CCMP1986 / NIES-2087 / MED4)).